A 371-amino-acid polypeptide reads, in one-letter code: DNA repair protein RAD14 (371 aa).

Residues 26–48 (LSSDQLNRIESRNEPLKTRPLAV) form a disordered region. Residues 32–42 (NRIESRNEPLK) show a composition bias toward basic and acidic residues. The Zn(2+) site is built by Cys191, Cys194, Cys213, and Cys216. The segment at 191 to 216 (CIECHINIEMDPVLHDVFKLQVCKQC) is a zinc-finger region.

It belongs to the XPA family. Two monomers bind to kinked/damaged DNA (construct with only the C-terminal DNA-binding domain). Component of the nucleotide excision repair factor 1 (NEF1) complex consisting of RAD1, RAD10 and RAD14.

The protein localises to the nucleus. In terms of biological role, involved in nucleotide excision repair. Binds specifically to damaged DNA. Required for the incision step. The protein is DNA repair protein RAD14 (RAD14) of Saccharomyces cerevisiae (strain ATCC 204508 / S288c) (Baker's yeast).